Consider the following 633-residue polypeptide: Cyclic GMP-AMP synthase-like receptor 1 (633 aa).

Disordered stretches follow at residues 23-80 (KVHG…HPHT), 107-214 (FKGP…TDPF), and 250-276 (REDDKSDQEKRDSWKRREGSVDDRPSS). Residues 29-67 (KQHESAHPPRERHTERTATKRSDETKTASRPTASHEGKT) show a composition bias toward basic and acidic residues. Over residues 68–80 (HTTNPRGQVHPHT) the composition is skewed to polar residues. Basic and acidic residues-rich tracts occupy residues 125 to 143 (RKPETPKKPHSATKDDHRT), 176 to 194 (RKPDTPKKPHSATKDDHRT), and 250 to 274 (REDDKSDQEKRDSWKRREGSVDDRP). Residues E353, D355, and D455 each contribute to the Mg(2+) site.

Belongs to the mab-21 family. Mg(2+) is required as a cofactor. Requires Mn(2+) as cofactor.

The enzyme catalyses UTP + ATP = 2',3'-cUAMP + 2 diphosphate. Functionally, nucleotidyltransferase that catalyzes the formation of cyclic UMP-AMP (2',3'-cUAMP) from ATP and UTP and plays a key role in innate immunity. Acts as a key sensor of double-stranded DNA (dsDNA), the presence of dsDNA in the cytoplasm being a danger signal that triggers the immune responses. Directly binds dsDNA, activating the nucleotidyltransferase activity, leading to synthesis of 2',3'-cUAMP, a second messenger that binds to and activates Sting, thereby triggering the immune response via activation of the NF-kappa-B transcription factor. This chain is Cyclic GMP-AMP synthase-like receptor 1, found in Crassostrea virginica (Eastern oyster).